The following is a 303-amino-acid chain: Pseudouridine-5'-phosphate glycosidase (303 aa).

The Proton donor role is filled by Glu23. Residues Lys85 and Val105 each coordinate substrate. Asp137 contacts Mn(2+). 139 to 141 is a binding site for substrate; sequence SQD. Lys158 (nucleophile) is an active-site residue.

Belongs to the pseudouridine-5'-phosphate glycosidase family. Homotrimer. Mn(2+) is required as a cofactor.

The catalysed reaction is D-ribose 5-phosphate + uracil = psi-UMP + H2O. Catalyzes the reversible cleavage of pseudouridine 5'-phosphate (PsiMP) to ribose 5-phosphate and uracil. Functions biologically in the cleavage direction, as part of a pseudouridine degradation pathway. This is Pseudouridine-5'-phosphate glycosidase from Myxococcus xanthus (strain DK1622).